A 1218-amino-acid polypeptide reads, in one-letter code: Probable RNA-dependent RNA polymerase SHL2 (1218 aa).

Belongs to the RdRP family.

The enzyme catalyses RNA(n) + a ribonucleoside 5'-triphosphate = RNA(n+1) + diphosphate. Involved in the RNA silencing pathway. Probably required for the generation of small interfering RNAs (siRNAs). Regulates shoot apical meristem (SAM) initiation and maintenance and leaf polarization through the trans-acting siRNAS (ta-siRNAs) pathway which probably modulates the expression of the ARF2, ARF3, ARF4, ARF14 and ARF15 genes. The chain is Probable RNA-dependent RNA polymerase SHL2 (SHL2) from Oryza sativa subsp. japonica (Rice).